Reading from the N-terminus, the 373-residue chain is Dual-specificity RNA methyltransferase RlmN (373 aa).

Glutamate 94 serves as the catalytic Proton acceptor. The Radical SAM core domain maps to 100–339; sequence EDDRATLCVS…VIVRKTRGDD (240 aa). A disulfide bridge links cysteine 107 with cysteine 344. [4Fe-4S] cluster contacts are provided by cysteine 114, cysteine 118, and cysteine 121. Residues 168–169, serine 200, 222–224, and asparagine 301 contribute to the S-adenosyl-L-methionine site; these read GE and SIH. Residue cysteine 344 is the S-methylcysteine intermediate of the active site.

This sequence belongs to the radical SAM superfamily. RlmN family. It depends on [4Fe-4S] cluster as a cofactor.

It is found in the cytoplasm. It catalyses the reaction adenosine(2503) in 23S rRNA + 2 reduced [2Fe-2S]-[ferredoxin] + 2 S-adenosyl-L-methionine = 2-methyladenosine(2503) in 23S rRNA + 5'-deoxyadenosine + L-methionine + 2 oxidized [2Fe-2S]-[ferredoxin] + S-adenosyl-L-homocysteine. The enzyme catalyses adenosine(37) in tRNA + 2 reduced [2Fe-2S]-[ferredoxin] + 2 S-adenosyl-L-methionine = 2-methyladenosine(37) in tRNA + 5'-deoxyadenosine + L-methionine + 2 oxidized [2Fe-2S]-[ferredoxin] + S-adenosyl-L-homocysteine. In terms of biological role, specifically methylates position 2 of adenine 2503 in 23S rRNA and position 2 of adenine 37 in tRNAs. m2A2503 modification seems to play a crucial role in the proofreading step occurring at the peptidyl transferase center and thus would serve to optimize ribosomal fidelity. In Shewanella sp. (strain W3-18-1), this protein is Dual-specificity RNA methyltransferase RlmN.